Reading from the N-terminus, the 149-residue chain is Large ribosomal subunit protein bL9 (149 aa).

Belongs to the bacterial ribosomal protein bL9 family.

Binds to the 23S rRNA. The sequence is that of Large ribosomal subunit protein bL9 from Amoebophilus asiaticus (strain 5a2).